Here is an 803-residue protein sequence, read N- to C-terminus: MADMSVKQLADLVRTTPERLLEQLKEAGVAITHVDQTISDEEKRKLLLHLKTSHSTETDKKRSKIVLKRKKLSVVKSGKKSVNVEIRSKRTYTKPVVEQKRETEPAPTQEVPLTSDTTNLNEKAEVNVATLEKAVEAEVKEEAKKTPSEKKETPKKGPRKETRRSRKPDKEDKWEREELHMTKLVEERRRRHKPAHMPDSDSASAKLEQGFARPTAPVVREVALPESITVADLAQKMSVKAAEVIKAMMKLGAMVTINQRIDQETAAIVVEEMGHKPKLIKEDVLEENLVATLGEQTGEAVPRAPVVTIMGHVDHGKTSLLDYIRRTKVTSTEAGGITQHIGAYHVETELGMITFLDTPGHEAFTAMRARGAKCTDIVVLVVAADDGVMPQTVEAIQHARAAKVPVVVAVNKIDKPEADPERIKTELSTHDVLPEEWGGDTMFQPISAKTGEGIDALLERILLQAEVLELKAVDNGPARGMVVESRLDRGRGPVATVLVTSGELHLGDILLVGREYGRVRAMIGDDGRPCESAGPSMPVEVLGLSGTSVAGEEAIVVPDERKAREIARFRQGKYREVRLAKKQTAHLERIFDRMGEGKQNTLNIVLKADVQGSLEALTEALNKLSTDEVKVNIIASGVGGITESDVNLAIASDAVVIGFNVRADAPTRVLVEREGVDLRYYSIIYDLIDEVKKALSGLLAPEFEEKIVGLAEVRDVFRSSKIGAIAGCMVVEGVVRRHLPIRVLRDNVVIYEGQLESLRRYKEDVAEVRQGTECGIGVKNYNDVKVGDQIEVYEKTQVHRTIA.

Disordered stretches follow at residues 95–125 and 138–178; these read PVVEQKRETEPAPTQEVPLTSDTTNLNEKAE and EVKE…EREE. The segment covering 111–121 has biased composition (polar residues); sequence VPLTSDTTNLN. Basic and acidic residues predominate over residues 138–155; sequence EVKEEAKKTPSEKKETPK. Over residues 156–167 the composition is skewed to basic residues; that stretch reads KGPRKETRRSRK. Over residues 168–178 the composition is skewed to basic and acidic residues; sequence PDKEDKWEREE. The 170-residue stretch at 302–471 folds into the tr-type G domain; that stretch reads PRAPVVTIMG…LLQAEVLELK (170 aa). The interval 311 to 318 is G1; that stretch reads GHVDHGKT. A GTP-binding site is contributed by 311–318; sequence GHVDHGKT. The segment at 336-340 is G2; it reads GITQH. Residues 357 to 360 are G3; the sequence is DTPG. GTP contacts are provided by residues 357 to 361 and 411 to 414; these read DTPGH and NKID. Residues 411 to 414 are G4; that stretch reads NKID. The segment at 447–449 is G5; sequence SAK.

It belongs to the TRAFAC class translation factor GTPase superfamily. Classic translation factor GTPase family. IF-2 subfamily.

It is found in the cytoplasm. In terms of biological role, one of the essential components for the initiation of protein synthesis. Protects formylmethionyl-tRNA from spontaneous hydrolysis and promotes its binding to the 30S ribosomal subunits. Also involved in the hydrolysis of GTP during the formation of the 70S ribosomal complex. In Coxiella burnetii (strain RSA 331 / Henzerling II), this protein is Translation initiation factor IF-2.